A 466-amino-acid chain; its full sequence is Uronate isomerase (466 aa).

This sequence belongs to the metallo-dependent hydrolases superfamily. Uronate isomerase family.

The catalysed reaction is D-glucuronate = D-fructuronate. The enzyme catalyses aldehydo-D-galacturonate = keto-D-tagaturonate. The protein operates within carbohydrate metabolism; pentose and glucuronate interconversion. The protein is Uronate isomerase of Rhizorhabdus wittichii (strain DSM 6014 / CCUG 31198 / JCM 15750 / NBRC 105917 / EY 4224 / RW1) (Sphingomonas wittichii).